The primary structure comprises 197 residues: uncharacterized protein (197 aa).

This is an uncharacterized protein from Orgyia pseudotsugata multicapsid polyhedrosis virus (OpMNPV).